We begin with the raw amino-acid sequence, 669 residues long: RNA-binding protein 14 (669 aa).

RRM domains lie at 1 to 73 and 79 to 149; these read MKIF…MSRP and WKIF…LSTK. Glycyl lysine isopeptide (Lys-Gly) (interchain with G-Cter in SUMO2) cross-links involve residues K126, K135, K138, K149, and K153. 2 disordered regions span residues 147-175 and 193-232; these read STKG…DTAF and NSTG…PLTA. S161 is modified (phosphoserine). K164 carries the N6-acetyllysine; alternate modification. K164 participates in a covalent cross-link: Glycyl lysine isopeptide (Lys-Gly) (interchain with G-Cter in SUMO2); alternate. A Phosphothreonine modification is found at T206. Residues S220, S242, S244, S256, S272, and S280 each carry the phosphoserine modification. The interval 284–303 is disordered; that stretch reads PYRGQLASPSSQSAAASSLG. Over residues 287 to 303 the composition is skewed to low complexity; it reads GQLASPSSQSAAASSLG. The interval 307–354 is TRBP-interacting domain; interaction with STIL; it reads GAQPSASALSSYGGQAAAASSLNSYGAQGSSLASYGNQPSSYGAQAAS. 4 positions are modified to phosphoserine: S520, S523, S527, and S562. The disordered stretch occupies residues 566–592; the sequence is VANANSTPPPYERTRLSPPRASYDDPY. Phosphothreonine is present on T572. S582 bears the Phosphoserine mark. K600 is covalently cross-linked (Glycyl lysine isopeptide (Lys-Gly) (interchain with G-Cter in SUMO2)). Phosphoserine occurs at positions 618, 620, 623, 627, 643, and 649.

In terms of assembly, interacts with NCOA6, CITED1 and XRCC5/KU86. Interacts with SS18. Interacts with STIL and interferes with its interaction with CPAP. Interacts with gamma-tubulin. Part of the HDP-RNP complex composed of at least HEXIM1, PRKDC, XRCC5, XRCC6, paraspeckle proteins (SFPQ, NONO, PSPC1, RBM14, and MATR3) and NEAT1 RNA.

Its subcellular location is the nucleus. It localises to the nucleolus. It is found in the cytoplasm. In terms of biological role, may function as a nuclear receptor coactivator, enhancing transcription through other coactivators such as NCOA6 and CITED1. Regulates centriole biogenesis by suppressing the formation of aberrant centriolar protein complexes in the cytoplasm and thus preserving mitotic spindle integrity. Prevents the formation of the STIL-CPAP complex (which can induce the formation of aberrant centriolar protein complexes) by interfering with the interaction of STIL with CPAP. Plays a role in the regulation of DNA virus-mediated innate immune response by assembling into the HDP-RNP complex, a complex that serves as a platform for IRF3 phosphorylation and subsequent innate immune response activation through the cGAS-STING pathway. This is RNA-binding protein 14 (RBM14) from Pongo abelii (Sumatran orangutan).